Consider the following 430-residue polypeptide: GTPase Obg (430 aa).

The region spanning 1-158 (MFVDQVKISL…LEVTLELKLL (158 aa)) is the Obg domain. A disordered region spans residues 118–145 (RGGRGGRGNSRFATPRNPAPDFSENGEP). An OBG-type G domain is found at 159–329 (ADVGLVGFPS…LLYQIADKLE (171 aa)). GTP is bound by residues 165–172 (GFPSVGKS), 190–194 (FTTIK), 212–215 (DLPG), 282–285 (NKMD), and 310–312 (STI). The Mg(2+) site is built by serine 172 and threonine 192. The OCT domain occupies 352 to 430 (KHTPSADKFT…ILGGEFEFVE (79 aa)).

This sequence belongs to the TRAFAC class OBG-HflX-like GTPase superfamily. OBG GTPase family. As to quaternary structure, monomer. Mg(2+) serves as cofactor.

The protein localises to the cytoplasm. Its function is as follows. An essential GTPase which binds GTP, GDP and possibly (p)ppGpp with moderate affinity, with high nucleotide exchange rates and a fairly low GTP hydrolysis rate. Plays a role in control of the cell cycle, stress response, ribosome biogenesis and in those bacteria that undergo differentiation, in morphogenesis control. This Staphylococcus epidermidis (strain ATCC 35984 / DSM 28319 / BCRC 17069 / CCUG 31568 / BM 3577 / RP62A) protein is GTPase Obg.